A 1612-amino-acid polypeptide reads, in one-letter code: uncharacterized protein (1612 aa).

Residues 23 to 52 adopt a coiled-coil conformation; the sequence is ENKNIEMTTLKDKKEMKNENLSKINVKKEN. Over residues 46–93 the composition is skewed to basic and acidic residues; it reads INVKKENHDKNHDKNHDKNHDKNHDKNHDKNHDKNHDKNHDKNHDKNH. 2 disordered regions span residues 46–94 and 369–400; these read INVK…KNHV and EDDN…HEIQ. Positions 375–394 are enriched in polar residues; it reads DNPLYSNNNTLKEQNTSTPL. A helical membrane pass occupies residues 479–499; the sequence is FIVTLSEICLILTPHYVNIIN. Disordered stretches follow at residues 698–777, 992–1037, 1091–1157, and 1257–1291; these read TSLT…EKKL, NELD…KNDP, SGKS…RNMS, and NQTT…NQDK. Basic and acidic residues predominate over residues 708–777; the sequence is KNDEIKKTGE…KKKTGEEKKL (70 aa). Low complexity-rich tracts occupy residues 996–1028, 1102–1140, and 1257–1271; these read NNNN…NNNN, SNNN…NSTN, and NQTT…QTSN. Coiled coils occupy residues 1338-1362, 1444-1469, and 1553-1601; these read YCNN…INNK, SNKK…IDND, and NMED…KFLT. A compositionally biased stretch (basic and acidic residues) spans 1554-1566; that stretch reads MEDEKNEKLNDKE. A disordered region spans residues 1554–1612; that stretch reads MEDEKNEKLNDKEGEYEDVTENLNEQEAEEEAEEEAEEEEEEEDKFLTPEHLPINVEIK. The span at 1567-1597 shows a compositional bias: acidic residues; the sequence is GEYEDVTENLNEQEAEEEAEEEAEEEEEEED.

The protein resides in the membrane. This is an uncharacterized protein from Plasmodium falciparum (isolate 3D7).